The primary structure comprises 564 residues: Putative zinc metalloproteinase in scaA 5'region (564 aa).

The region spanning 1 to 564 (MTRLQDDFYD…KEADFSAEEF (564 aa)) is the Peptidase M13 domain. Residue histidine 478 coordinates Zn(2+). Glutamate 479 is a catalytic residue. Residues histidine 482 and glutamate 538 each contribute to the Zn(2+) site. Aspartate 542 (proton donor) is an active-site residue.

The protein belongs to the peptidase M13 family. Requires Zn(2+) as cofactor.

The chain is Putative zinc metalloproteinase in scaA 5'region from Streptococcus gordonii (strain Challis / ATCC 35105 / BCRC 15272 / CH1 / DL1 / V288).